The following is a 344-amino-acid chain: N-acetyl-gamma-glutamyl-phosphate reductase (344 aa).

The active site involves C150.

It belongs to the NAGSA dehydrogenase family. Type 1 subfamily.

The protein resides in the cytoplasm. It catalyses the reaction N-acetyl-L-glutamate 5-semialdehyde + phosphate + NADP(+) = N-acetyl-L-glutamyl 5-phosphate + NADPH + H(+). Its pathway is amino-acid biosynthesis; L-arginine biosynthesis; N(2)-acetyl-L-ornithine from L-glutamate: step 3/4. Catalyzes the NADPH-dependent reduction of N-acetyl-5-glutamyl phosphate to yield N-acetyl-L-glutamate 5-semialdehyde. The chain is N-acetyl-gamma-glutamyl-phosphate reductase from Pseudomonas aeruginosa (strain ATCC 15692 / DSM 22644 / CIP 104116 / JCM 14847 / LMG 12228 / 1C / PRS 101 / PAO1).